Consider the following 173-residue polypeptide: Archaemetzincin (173 aa).

His130 contributes to the Zn(2+) binding site. Catalysis depends on Glu131, which acts as the Proton acceptor. Positions 134, 140, 141, 146, 165, and 168 each coordinate Zn(2+).

The protein belongs to the peptidase M54 family. Monomer. Requires Zn(2+) as cofactor.

In terms of biological role, probable zinc metalloprotease whose natural substrate is unknown. In Haloarcula marismortui (strain ATCC 43049 / DSM 3752 / JCM 8966 / VKM B-1809) (Halobacterium marismortui), this protein is Archaemetzincin.